A 347-amino-acid polypeptide reads, in one-letter code: D-alanine--D-alanine ligase (347 aa).

Positions Lys131 to Asp333 constitute an ATP-grasp domain. Glu161 to Glu216 is a binding site for ATP. Residues Asp287, Glu300, and Asn302 each coordinate Mg(2+).

Belongs to the D-alanine--D-alanine ligase family. Mg(2+) is required as a cofactor. The cofactor is Mn(2+).

Its subcellular location is the cytoplasm. It carries out the reaction 2 D-alanine + ATP = D-alanyl-D-alanine + ADP + phosphate + H(+). The protein operates within cell wall biogenesis; peptidoglycan biosynthesis. In terms of biological role, cell wall formation. The protein is D-alanine--D-alanine ligase of Streptococcus pneumoniae (strain Taiwan19F-14).